A 70-amino-acid chain; its full sequence is Conotoxin ba3a (70 aa).

The first 20 residues, 1 to 20 (MLKIGVMLSIILVLFPLATL), serve as a signal peptide directing secretion. A propeptide spanning residues 21 to 55 (QLVAERPAAERYAENKQDLNPDERRNYLVDLGVER) is cleaved from the precursor.

In terms of tissue distribution, expressed by the venom duct.

The protein localises to the secreted. The protein is Conotoxin ba3a of Conus bayani (Bayan's cone).